Consider the following 292-residue polypeptide: uncharacterized protein (292 aa).

A signal peptide spans 1–21 (MNSNSNKKRDPARFPAGVAQG). Residues 1–30 (MNSNSNKKRDPARFPAGVAQGCSTTRAGDL) are disordered.

This is an uncharacterized protein from Treponema pallidum (strain Nichols).